The chain runs to 141 residues: Nucleoside diphosphate kinase (141 aa).

Residues Lys11, Phe59, Arg87, Thr93, Arg104, and Asn114 each coordinate ATP. His117 functions as the Pros-phosphohistidine intermediate in the catalytic mechanism.

Belongs to the NDK family. Homotetramer. It depends on Mg(2+) as a cofactor.

The protein resides in the cytoplasm. The catalysed reaction is a 2'-deoxyribonucleoside 5'-diphosphate + ATP = a 2'-deoxyribonucleoside 5'-triphosphate + ADP. It carries out the reaction a ribonucleoside 5'-diphosphate + ATP = a ribonucleoside 5'-triphosphate + ADP. Its function is as follows. Major role in the synthesis of nucleoside triphosphates other than ATP. The ATP gamma phosphate is transferred to the NDP beta phosphate via a ping-pong mechanism, using a phosphorylated active-site intermediate. This chain is Nucleoside diphosphate kinase, found in Hamiltonella defensa subsp. Acyrthosiphon pisum (strain 5AT).